We begin with the raw amino-acid sequence, 417 residues long: Hyaluronidase-3 (417 aa).

Residues 1–20 form the signal peptide; the sequence is MTTQLGPALVLGVALCLGCG. Intrachain disulfides connect C42–C331, C205–C220, C356–C367, C361–C395, and C397–C406. An N-linked (GlcNAc...) asparagine glycan is attached at N69. Residue E129 is the Proton donor of the active site. N215 carries an N-linked (GlcNAc...) asparagine glycan. The EGF-like domain maps to 352–407; it reads AAMACSHQRCHGHGRCARRDPGQMEAFLHLWPDGSLGDWKSFSCHCYWGWAGPTCQ.

It belongs to the glycosyl hydrolase 56 family. N-glycosylated. Expressed in sperm. Highly expressed in epidermis of the skin, where it is expressed intracellularily in the deep horny layer (at protein level). Bone marrow, testis and kidney.

It localises to the secreted. Its subcellular location is the cell membrane. It is found in the cytoplasmic vesicle. The protein resides in the secretory vesicle. The protein localises to the acrosome. It localises to the endoplasmic reticulum. Its subcellular location is the early endosome. It catalyses the reaction Random hydrolysis of (1-&gt;4)-linkages between N-acetyl-beta-D-glucosamine and D-glucuronate residues in hyaluronate.. Functionally, facilitates sperm penetration into the layer of cumulus cells surrounding the egg by digesting hyaluronic acid. Involved in induction of the acrosome reaction in the sperm. Involved in follicular atresia, the breakdown of immature ovarian follicles that are not selected to ovulate. Induces ovarian granulosa cell apoptosis, possibly via apoptotic signaling pathway involving CASP8 and CASP3 activation, and poly(ADP-ribose) polymerase (PARP) cleavage. Has no hyaluronidase activity in embryonic fibroblasts in vitro. Has no hyaluronidase activity in granulosa cells in vitro. The chain is Hyaluronidase-3 (HYAL3) from Homo sapiens (Human).